The primary structure comprises 181 residues: Large ribosomal subunit protein uL10 (181 aa).

Belongs to the universal ribosomal protein uL10 family. As to quaternary structure, part of the ribosomal stalk of the 50S ribosomal subunit. The N-terminus interacts with L11 and the large rRNA to form the base of the stalk. The C-terminus forms an elongated spine to which L12 dimers bind in a sequential fashion forming a multimeric L10(L12)X complex.

Functionally, forms part of the ribosomal stalk, playing a central role in the interaction of the ribosome with GTP-bound translation factors. The protein is Large ribosomal subunit protein uL10 of Nostoc sp. (strain PCC 7120 / SAG 25.82 / UTEX 2576).